Here is a 215-residue protein sequence, read N- to C-terminus: 3-isopropylmalate dehydratase small subunit (215 aa).

Belongs to the LeuD family. LeuD type 1 subfamily. In terms of assembly, heterodimer of LeuC and LeuD.

The enzyme catalyses (2R,3S)-3-isopropylmalate = (2S)-2-isopropylmalate. It functions in the pathway amino-acid biosynthesis; L-leucine biosynthesis; L-leucine from 3-methyl-2-oxobutanoate: step 2/4. Functionally, catalyzes the isomerization between 2-isopropylmalate and 3-isopropylmalate, via the formation of 2-isopropylmaleate. The sequence is that of 3-isopropylmalate dehydratase small subunit from Xanthomonas campestris pv. campestris (strain 8004).